Here is a 102-residue protein sequence, read N- to C-terminus: Large ribosomal subunit protein bL21 (102 aa).

Residues 77-88 are compositionally biased toward basic residues; that stretch reads KPKKHTHTKQGH. The tract at residues 77 to 102 is disordered; the sequence is KPKKHTHTKQGHRQPYTKVTINKINA. Over residues 93–102 the composition is skewed to polar residues; sequence TKVTINKINA.

Belongs to the bacterial ribosomal protein bL21 family. In terms of assembly, part of the 50S ribosomal subunit. Contacts protein L20.

Functionally, this protein binds to 23S rRNA in the presence of protein L20. The protein is Large ribosomal subunit protein bL21 of Limosilactobacillus reuteri (strain DSM 20016) (Lactobacillus reuteri).